The primary structure comprises 136 residues: ATP synthase F(0) complex subunit C1, mitochondrial (136 aa).

A mitochondrion-targeting transit peptide spans Met1–Arg61. Residues Val77–Tyr97 form a helical membrane-spanning segment. Lys104 bears the N6,N6,N6-trimethyllysine mark. The helical transmembrane segment at Ile112–Ile132 threads the bilayer.

The protein belongs to the ATPase C chain family. As to quaternary structure, homooctamer; the c-ring consists of eight c subunits forming a circle, and each subunit adopts a hairpin shape. Component of the ATP synthase complex composed at least of ATP5F1A/subunit alpha, ATP5F1B/subunit beta, ATP5MC1/subunit c (homooctomer), MT-ATP6/subunit a, MT-ATP8/subunit 8, ATP5ME/subunit e, ATP5MF/subunit f, ATP5MG/subunit g, ATP5MK/subunit k, ATP5MJ/subunit j, ATP5F1C/subunit gamma, ATP5F1D/subunit delta, ATP5F1E/subunit epsilon, ATP5PF/subunit F6, ATP5PB/subunit b, ATP5PD/subunit d, ATP5PO/subunit OSCP. ATP synthase complex consists of a soluble F(1) head domain (subunits alpha(3) and beta(3)) - the catalytic core - and a membrane F(0) domain - the membrane proton channel (subunits c, a, 8, e, f, g, k and j). These two domains are linked by a central stalk (subunits gamma, delta, and epsilon) rotating inside the F1 region and a stationary peripheral stalk (subunits F6, b, d, and OSCP). Interacts with TMEM70 (homooligomer form); this interaction facilitates the oligomer formation of subunit c/ATP5MC1 (c-ring) and the c-ring membrane insertion and also protects ATP5MC1 against intramitochondrial proteolysis. Post-translationally, trimethylated by ATPSCKMT at Lys-104. Methylation is required for proper incorporation of the C subunit into the ATP synthase complex and mitochondrial respiration.

The protein localises to the mitochondrion membrane. It catalyses the reaction H(+)(in) = H(+)(out). Subunit c, of the mitochondrial membrane ATP synthase complex (F(1)F(0) ATP synthase or Complex V) that produces ATP from ADP in the presence of a proton gradient across the membrane which is generated by electron transport complexes of the respiratory chain. ATP synthase complex consist of a soluble F(1) head domain - the catalytic core - and a membrane F(1) domain - the membrane proton channel. These two domains are linked by a central stalk rotating inside the F(1) region and a stationary peripheral stalk. During catalysis, ATP synthesis in the catalytic domain of F(1) is coupled via a rotary mechanism of the central stalk subunits to proton translocation. With the subunit a (MT-ATP6), forms the proton-conducting channel in the F(0) domain, that contains two crucial half-channels (inlet and outlet) that facilitate proton movement from the mitochondrial intermembrane space (IMS) into the matrix. Protons are taken up via the inlet half-channel and released through the outlet half-channel, following a Grotthuss mechanism. This chain is ATP synthase F(0) complex subunit C1, mitochondrial, found in Ovis aries (Sheep).